The following is a 265-amino-acid chain: Reduced viability upon starvation protein 161 (265 aa).

Residues 15-239 (HSVIIKNVDK…LDQQSRDDYA (225 aa)) form the BAR domain. The stretch at 126 to 193 (YFKEIEEAIK…NQLKTELPQL (68 aa)) forms a coiled coil.

The protein resides in the cytoplasm. The protein localises to the cytoskeleton. Its function is as follows. Component of a cytoskeletal structure that is required for the formation of endocytic vesicles at the plasma membrane level. The polypeptide is Reduced viability upon starvation protein 161 (RVS161) (Saccharomyces cerevisiae (strain ATCC 204508 / S288c) (Baker's yeast)).